Reading from the N-terminus, the 190-residue chain is Threonylcarbamoyl-AMP synthase (190 aa).

Positions 7-190 (GDAIAAAIDV…ALTGELFRQG (184 aa)) constitute a YrdC-like domain.

The protein belongs to the SUA5 family. TsaC subfamily.

It is found in the cytoplasm. It carries out the reaction L-threonine + hydrogencarbonate + ATP = L-threonylcarbamoyladenylate + diphosphate + H2O. Its function is as follows. Required for the formation of a threonylcarbamoyl group on adenosine at position 37 (t(6)A37) in tRNAs that read codons beginning with adenine. Catalyzes the conversion of L-threonine, HCO(3)(-)/CO(2) and ATP to give threonylcarbamoyl-AMP (TC-AMP) as the acyladenylate intermediate, with the release of diphosphate. In Escherichia coli O1:K1 / APEC, this protein is Threonylcarbamoyl-AMP synthase.